Consider the following 353-residue polypeptide: NADH-quinone oxidoreductase subunit H (353 aa).

9 consecutive transmembrane segments (helical) span residues 8 to 28 (LLVY…LFIW), 75 to 95 (GVFW…FAAI), 108 to 128 (IGIL…FMAG), 148 to 168 (VSYE…TGSL), 178 to 198 (SVPF…AAMA), 229 to 249 (LFYL…TTLF), 258 to 278 (LHPV…IIWV), 297 to 317 (FLLP…LAAP), and 319 to 339 (MNTA…ILLF).

This sequence belongs to the complex I subunit 1 family. In terms of assembly, NDH-1 is composed of 14 different subunits. Subunits NuoA, H, J, K, L, M, N constitute the membrane sector of the complex.

The protein resides in the cell membrane. It catalyses the reaction a quinone + NADH + 5 H(+)(in) = a quinol + NAD(+) + 4 H(+)(out). In terms of biological role, NDH-1 shuttles electrons from NADH, via FMN and iron-sulfur (Fe-S) centers, to quinones in the respiratory chain. The immediate electron acceptor for the enzyme in this species is believed to be ubiquinone. Couples the redox reaction to proton translocation (for every two electrons transferred, four hydrogen ions are translocated across the cytoplasmic membrane), and thus conserves the redox energy in a proton gradient. This subunit may bind ubiquinone. The polypeptide is NADH-quinone oxidoreductase subunit H (Dehalococcoides mccartyi (strain ATCC BAA-2266 / KCTC 15142 / 195) (Dehalococcoides ethenogenes (strain 195))).